Consider the following 243-residue polypeptide: 1-(5-phosphoribosyl)-5-[(5-phosphoribosylamino)methylideneamino] imidazole-4-carboxamide isomerase (243 aa).

The active-site Proton acceptor is aspartate 8. The Proton donor role is filled by aspartate 129.

Belongs to the HisA/HisF family.

It localises to the cytoplasm. It carries out the reaction 1-(5-phospho-beta-D-ribosyl)-5-[(5-phospho-beta-D-ribosylamino)methylideneamino]imidazole-4-carboxamide = 5-[(5-phospho-1-deoxy-D-ribulos-1-ylimino)methylamino]-1-(5-phospho-beta-D-ribosyl)imidazole-4-carboxamide. It participates in amino-acid biosynthesis; L-histidine biosynthesis; L-histidine from 5-phospho-alpha-D-ribose 1-diphosphate: step 4/9. The protein is 1-(5-phosphoribosyl)-5-[(5-phosphoribosylamino)methylideneamino] imidazole-4-carboxamide isomerase of Nitratidesulfovibrio vulgaris (strain DSM 19637 / Miyazaki F) (Desulfovibrio vulgaris).